Consider the following 986-residue polypeptide: Ephrin type-A receptor 4 (986 aa).

The N-terminal stretch at methionine 1–alanine 19 is a signal peptide. The Extracellular portion of the chain corresponds to valine 20–threonine 547. Residues glutamate 30–arginine 209 form the Eph LBD domain. N-linked (GlcNAc...) asparagine glycans are attached at residues asparagine 235, asparagine 340, and asparagine 408. 2 Fibronectin type-III domains span residues proline 328 to alanine 439 and alanine 440 to serine 537. Asparagine 545 carries an N-linked (GlcNAc...) asparagine glycan. Residues valine 548 to isoleucine 569 form a helical membrane-spanning segment. Residues serine 570 to valine 986 are Cytoplasmic-facing. A phosphotyrosine; by autocatalysis mark is found at tyrosine 596 and tyrosine 602. The 262-residue stretch at isoleucine 621–isoleucine 882 folds into the Protein kinase domain. Residues isoleucine 627 to valine 635 and lysine 653 each bind ATP. The active-site Proton acceptor is aspartate 746. Phosphotyrosine; by autocatalysis is present on residues tyrosine 779 and tyrosine 928. The region spanning serine 911–glutamine 975 is the SAM domain. The PDZ-binding signature appears at valine 984 to valine 986.

This sequence belongs to the protein kinase superfamily. Tyr protein kinase family. Ephrin receptor subfamily. As to quaternary structure, heterotetramer upon binding of the ligand. The heterotetramer is composed of an ephrin dimer and a receptor dimer. Oligomerization is probably required to induce biological responses. Interacts (phosphorylated at position Tyr-602) with FYN. Interacts with CDK5, CDK5R1 and NGEF; upon activation by EFNA1 induces NGEF phosphorylation by the kinase CDK5. Interacts with CHN1; effector of EPHA4 in axon guidance linking EPHA4 activation to RAC1 regulation. Interacts (via PDZ motif) with SIPA1L1 (via PDZ domain); controls neuronal morphology through regulation of the RAP1 (RAP1A or RAP1B) and RAP2 (RAP2A, RAP2B or RAP2C) GTPases. Forms a ternary complex composed of ADAM10, CADH1 and EPHA4; within the complex, CADH1 is cleaved by ADAM10 which disrupts adherens junctions. In terms of tissue distribution, ubiquitous.

It localises to the cell membrane. Its subcellular location is the cell projection. The protein resides in the axon. The protein localises to the dendrite. It is found in the postsynaptic density membrane. It localises to the early endosome. Its subcellular location is the cell junction. The protein resides in the adherens junction. The enzyme catalyses L-tyrosyl-[protein] + ATP = O-phospho-L-tyrosyl-[protein] + ADP + H(+). Receptor tyrosine kinase which binds membrane-bound ephrin family ligands residing on adjacent cells, leading to contact-dependent bidirectional signaling into neighboring cells. The signaling pathway downstream of the receptor is referred to as forward signaling while the signaling pathway downstream of the ephrin ligand is referred to as reverse signaling. Highly promiscuous, it has the unique property among Eph receptors to bind and to be physiologically activated by both GPI-anchored ephrin-A and transmembrane ephrin-B ligands including EFNA1 and EFNB3. Upon activation by ephrin ligands, modulates cell morphology and integrin-dependent cell adhesion through regulation of the Rac, Rap and Rho GTPases activity. Plays an important role in the development of the nervous system controlling different steps of axonal guidance including the establishment of the corticospinal projections. May also control the segregation of motor and sensory axons during neuromuscular circuit development. In addition to its role in axonal guidance plays a role in synaptic plasticity. Activated by EFNA1 phosphorylates CDK5 at 'Tyr-15' which in turn phosphorylates NGEF regulating RHOA and dendritic spine morphogenesis. In the nervous system, also plays a role in repair after injury preventing axonal regeneration and in angiogenesis playing a role in central nervous system vascular formation. Additionally, its promiscuity makes it available to participate in a variety of cell-cell signaling regulating for instance the development of the thymic epithelium. During development of the cochlear organ of Corti, regulates pillar cell separation by forming a ternary complex with ADAM10 and CADH1 which facilitates the cleavage of CADH1 by ADAM10 and disruption of adherens junctions. Phosphorylates CAPRIN1, promoting CAPRIN1-dependent formation of a membraneless compartment. The chain is Ephrin type-A receptor 4 (EPHA4) from Homo sapiens (Human).